Consider the following 387-residue polypeptide: DNA-damage-repair/toleration protein 111 (387 aa).

Residues methionine 1–glycine 213 form a disordered region. Low complexity predominate over residues serine 19–serine 29. Over residues aspartate 103 to aspartate 158 the composition is skewed to basic and acidic residues. The 47-residue stretch at glutamine 214 to serine 260 folds into the G-patch domain. The RRM domain occupies arginine 283–glutamate 369.

Component of the SWAP1-SFPS-RRC1 splicing factor complex which modulates pre-mRNA splicing to promote photomorphogenesis. Interacts with SWAP1 in a light-independent manner. Associates with the photoreceptor phytochrome B (phyB) in nuclear photobodies upon response to red light. Binds to the splicing factor 1 SF1, involved in 3' splicing site recognition. In terms of tissue distribution, expressed ubiquitously with highest levels in dry seeds and in cells surrounding the base of trichomes and guard cells.

The protein resides in the nucleus. The protein localises to the nucleus speckle. In terms of biological role, as a member of the SWAP1-SFPS-RRC1 splicing factor complex, modulates photomorphogenesis by regulating the gene expression and pre-messenger RNA (mRNA) alternative splicing of a large number of genes, including those involved in plant responses to light signaling, probably by helping in the 3' splice site determination. Associates with and regulates EARLY FLOWERING 3 (ELF3) mRNA processing, a key component of the circadian clock also involved in photomorphogenesis. Required for light-regulated (red, far-red and blue lights) photomorphogenesis in a PHYB- and PHYTOCHROME INTERACTING FACTORS- (PIFs) dependent manner. Promotes flowering under both short (SD) and long days (LD). Controls abscisic acid (ABA) sensitivity during seed development, stomatal responsiveness and germination by monitoring ABI3 splicing, upstream of the splicing factor SUPPRESSOR OF ABI3-ABI5. Seems to be involved in the resistance to UV light and chemical DNA-damaging agents. The protein is DNA-damage-repair/toleration protein 111 of Arabidopsis thaliana (Mouse-ear cress).